Reading from the N-terminus, the 122-residue chain is Large ribosomal subunit protein uL14c (122 aa).

This sequence belongs to the universal ribosomal protein uL14 family. In terms of assembly, part of the 50S ribosomal subunit.

It localises to the plastid. Binds to 23S rRNA. The protein is Large ribosomal subunit protein uL14c of Cuscuta exaltata (Tall dodder).